Reading from the N-terminus, the 238-residue chain is Major prion protein (238 aa).

An N-terminal signal peptide occupies residues 1 to 15; sequence MLVLFVATWSDLGLC. The segment at 16 to 215 is interaction with GRB2, ERI3 and SYN1; the sequence is KKRPKPGGWN…ESQAYYQRGS (200 aa). The tract at residues 18–93 is disordered; the sequence is RPKPGGWNTG…WHKPSKPKTS (76 aa). Tandem repeats lie at residues 44–52, 53–60, 61–68, and 69–76. A 4 X 8 AA tandem repeats of P-H-G-G-G-W-G-Q region spans residues 44 to 76; the sequence is PQGGGGWGQPHGGGWGQPHGGGWGQPHGGGWGQ. Gly residues predominate over residues 45 to 80; sequence QGGGGWGQPHGGGWGQPHGGGWGQPHGGGWGQGGGT. The Cu(2+) site is built by G47, G48, H54, G55, G56, H62, G63, G64, H70, G71, and G72. A compositionally biased stretch (basic residues) spans 83–93; it reads QWHKPSKPKTS. Cysteines 164 and 199 form a disulfide. 2 N-linked (GlcNAc...) asparagine glycosylation sites follow: N166 and N182. S215 carries GPI-anchor amidated serine lipidation. Residues 216–238 constitute a propeptide, removed in mature form; that stretch reads SMVLFSSPPVILLISFLIFLIVG.

Belongs to the prion family. Monomer and homodimer. Has a tendency to aggregate into amyloid fibrils containing a cross-beta spine, formed by a steric zipper of superposed beta-strands. Soluble oligomers may represent an intermediate stage on the path to fibril formation. Copper binding may promote oligomerization. Interacts with GRB2, APP, ERI3/PRNPIP and SYN1. Mislocalized cytosolically exposed PrP interacts with MGRN1; this interaction alters MGRN1 subcellular location and causes lysosomal enlargement. Interacts with KIAA1191.

It is found in the cell membrane. The protein resides in the golgi apparatus. Functionally, its primary physiological function is unclear. Has cytoprotective activity against internal or environmental stresses. May play a role in neuronal development and synaptic plasticity. May be required for neuronal myelin sheath maintenance. May play a role in iron uptake and iron homeostasis. Soluble oligomers are toxic to cultured neuroblastoma cells and induce apoptosis (in vitro). Association with GPC1 (via its heparan sulfate chains) targets PRNP to lipid rafts. Also provides Cu(2+) or Zn(2+) for the ascorbate-mediated GPC1 deaminase degradation of its heparan sulfate side chains. The protein is Major prion protein (PRNP) of Macaca sylvanus (Barbary macaque).